The following is a 742-amino-acid chain: ATP-dependent RNA helicase DBP7 (742 aa).

Residues 45–100 are disordered; the sequence is GKTVSRKRKANTTGDEGIIPGRGENSIKKLHKESSYSSEEQEKYKGRNAHNTQGRT. A Q motif motif is present at residues 143–172; the sequence is DQFASLGVTSLLVSHLEQKMRIKKPTSIQK. The Helicase ATP-binding domain occupies 178–372; it reads IIGNAGKNDF…NVALKDYKLI (195 aa). 191–198 serves as a coordination point for ATP; sequence AQTGSGKT. Residues 307 to 310 carry the DEAD box motif; sequence DEGD. Positions 405-605 constitute a Helicase C-terminal domain; the sequence is TLAATLNNIT…ILMPAFKDVN (201 aa). Positions 701-726 are disordered; it reads AMGLQSSKDGNSEKKPTKENSKNKMF. Residues 710–722 show a composition bias toward basic and acidic residues; the sequence is GNSEKKPTKENSK.

This sequence belongs to the DEAD box helicase family. DDX31/DBP7 subfamily.

Its subcellular location is the nucleus. The protein localises to the nucleolus. The enzyme catalyses ATP + H2O = ADP + phosphate + H(+). In terms of biological role, ATP-binding RNA helicase involved in the biogenesis of 60S ribosomal subunits and is required for the normal formation of 25S and 5.8S rRNAs. This is ATP-dependent RNA helicase DBP7 (DBP7) from Saccharomyces cerevisiae (strain YJM789) (Baker's yeast).